The sequence spans 108 residues: Thioredoxin (108 aa).

In terms of domain architecture, Thioredoxin spans 2–108; the sequence is SDAILYVSDD…QLTAFLDSQL (107 aa). Cysteines 33 and 36 form a disulfide.

The protein belongs to the thioredoxin family.

Functionally, component of the thioredoxin-thioredoxin reductase system. Participates in various redox reactions through the reversible oxidation of its active center dithiol to a disulfide and catalyzes dithiol-disulfide exchange reactions. The protein is Thioredoxin (trxA) of Acidithiobacillus ferridurans.